The following is an 88-amino-acid chain: Large ribosomal subunit protein bL31B (88 aa).

This sequence belongs to the bacterial ribosomal protein bL31 family. Type B subfamily. Part of the 50S ribosomal subunit.

The protein is Large ribosomal subunit protein bL31B of Paraburkholderia phytofirmans (strain DSM 17436 / LMG 22146 / PsJN) (Burkholderia phytofirmans).